We begin with the raw amino-acid sequence, 715 residues long: Polyribonucleotide nucleotidyltransferase (715 aa).

2 residues coordinate Mg(2+): Asp498 and Asp504. In terms of domain architecture, KH spans Pro565–Ile625. In terms of domain architecture, S1 motif spans Gly635 to Leu706.

The protein belongs to the polyribonucleotide nucleotidyltransferase family. Mg(2+) serves as cofactor.

The protein localises to the cytoplasm. It carries out the reaction RNA(n+1) + phosphate = RNA(n) + a ribonucleoside 5'-diphosphate. In terms of biological role, involved in mRNA degradation. Catalyzes the phosphorolysis of single-stranded polyribonucleotides processively in the 3'- to 5'-direction. This is Polyribonucleotide nucleotidyltransferase from Onion yellows phytoplasma (strain OY-M).